A 79-amino-acid polypeptide reads, in one-letter code: UPF0150 protein ssr1765 (79 aa).

It belongs to the UPF0150 family.

This chain is UPF0150 protein ssr1765, found in Synechocystis sp. (strain ATCC 27184 / PCC 6803 / Kazusa).